Reading from the N-terminus, the 356-residue chain is Serendipity locus protein beta (356 aa).

The C2H2-type 1; degenerate zinc finger occupies 171–193 (IPCHICGEMFSSQEVLERHIKAD). C2H2-type zinc fingers lie at residues 201-223 (ATCN…MNLH), 229-251 (LECR…MEVH), 257-279 (YQCD…LMRH), 286-308 (LICE…LRTH), and 315-337 (YPCP…KRVH).

In terms of assembly, binds chromatin; requires N-terminal regions to form protein-protein contacts, in addition to DNA specific recognition by the zinc fingers.

It is found in the nucleus. Its function is as follows. Binds to the consensus DNA sequence 5'-YCAGAGATGCGCA-3'. This chain is Serendipity locus protein beta (Sry-beta), found in Drosophila melanogaster (Fruit fly).